We begin with the raw amino-acid sequence, 808 residues long: Na(+)/H(+) antiporter 2 (808 aa).

9 consecutive transmembrane segments (helical) span residues 12 to 32 (HVAY…SLFV), 36 to 56 (LYIG…PHCL), 70 to 90 (ITLE…SVEL), 105 to 125 (LLVP…WILV), 128 to 148 (LNFP…PVLA), 174 to 194 (CNDG…LYPG), 203 to 223 (WICV…CIIG), 244 to 264 (FLAF…MLGV), and 267 to 287 (LLVS…AAKT). Asn-291 carries N-linked (GlcNAc...) asparagine glycosylation. Transmembrane regions (helical) follow at residues 294–314 (NVID…ILPW), 319–339 (NPDI…VIFL), 361–381 (AMFI…AITS), 409–429 (VMAC…IVHG), and 432–452 (VAVI…LPTG). 2 disordered regions span residues 478–499 (QRLD…SGMV) and 541–562 (HAST…NGRA). Polar residues predominate over residues 542–561 (ASTNDSHGTTTANLGTSNGR). 2 N-linked (GlcNAc...) asparagine glycosylation sites follow: Asn-545 and Asn-602. Residues 774–808 (LHSEDEMADDEAESENDMDYEDSDGPASRFKDHAD) form a disordered region. Residues 779–797 (EMADDEAESENDMDYEDSD) are compositionally biased toward acidic residues.

It belongs to the fungal Na(+)/H(+) exchanger family.

The protein resides in the membrane. Sodium export from cell, takes up external protons in exchange for internal sodium ions. Seems to be poorly expressed. The polypeptide is Na(+)/H(+) antiporter 2 (SOD22) (Zygosaccharomyces rouxii).